Here is an 87-residue protein sequence, read N- to C-terminus: Protein WFDC11 (87 aa).

A signal peptide spans 1–25; the sequence is MVSLMKLWIPMLMTFFCTVLLSVLG.

Its subcellular location is the secreted. The protein is Protein WFDC11 (WFDC11) of Homo sapiens (Human).